A 334-amino-acid polypeptide reads, in one-letter code: Transaldolase (334 aa).

Lys-136 (schiff-base intermediate with substrate) is an active-site residue.

The protein belongs to the transaldolase family. Type 1 subfamily. In terms of assembly, homodimer.

Its subcellular location is the cytoplasm. The catalysed reaction is D-sedoheptulose 7-phosphate + D-glyceraldehyde 3-phosphate = D-erythrose 4-phosphate + beta-D-fructose 6-phosphate. It participates in carbohydrate degradation; pentose phosphate pathway; D-glyceraldehyde 3-phosphate and beta-D-fructose 6-phosphate from D-ribose 5-phosphate and D-xylulose 5-phosphate (non-oxidative stage): step 2/3. Transaldolase is important for the balance of metabolites in the pentose-phosphate pathway. The sequence is that of Transaldolase from Nostoc punctiforme (strain ATCC 29133 / PCC 73102).